The sequence spans 368 residues: Probable staphylococcal-like nuclease CAN2 (368 aa).

G2 is lipidated: N-myristoyl glycine. The S-palmitoyl cysteine moiety is linked to residue C7. The tract at residues D16–T56 is disordered. Residues P27–P38 show a composition bias toward low complexity. The TNase-like domain maps to N168 to S344. A Ca(2+)-binding site is contributed by D181. The active site involves R251. D256 lines the Ca(2+) pocket. Catalysis depends on residues E259 and R293.

Belongs to the thermonuclease family. Requires Ca(2+) as cofactor.

It localises to the cell membrane. Its function is as follows. Enzyme that catalyzes the hydrolysis of both DNA and RNA at the 5' position of the phosphodiester bond. In Oryza sativa subsp. japonica (Rice), this protein is Probable staphylococcal-like nuclease CAN2.